Consider the following 300-residue polypeptide: Cysteine-rich venom protein (300 aa).

An N-terminal signal peptide occupies residues 1-21; that stretch reads MLSTMQTVGAVLMLSIVLVAG. Positions 22–24 are excised as a propeptide; it reads RKR. The region spanning 62 to 183 is the SCP domain; it reads LEMHNKIRAD…GNNKYFVCNY (122 aa).

In terms of processing, contains 11 disulfide bonds. Expressed by the venom duct.

The protein resides in the secreted. In terms of biological role, protease responsible for cleaving the conotoxins from their propeptide precursors. The target propeptide requires minimum four residues including a leucine N-terminal of the cleavage site for efficient substrate processing (example: Xaa-Xaa-Xaa-Leu-Asn-Lys-Arg-toxin). The chain is Cysteine-rich venom protein from Conus textile (Cloth-of-gold cone).